Consider the following 782-residue polypeptide: Gelsolin (782 aa).

The signal sequence occupies residues 1–27; it reads MAPHRPAPALLCALSLALCALSLPVRA. The actin-severing stretch occupies residues 53 to 176; the sequence is VVEHPEFLKA…YKKGGVASGF (124 aa). A Gelsolin-like 1 repeat occupies 76–158; it reads FDLVPVPTNL…VQGFESATFL (83 aa). At tyrosine 86 the chain carries Phosphotyrosine; by SRC; in vitro. Ca(2+) is bound by residues glycine 92, aspartate 93, glutamate 124, aspartate 136, glycine 141, and alanine 143. The tract at residues 123–126 is actin-actin interfilament contact point; it reads DESG. Position 162–169 (162–169) interacts with a 1,2-diacyl-sn-glycero-3-phospho-(1D-myo-inositol-4,5-bisphosphate); that stretch reads KSGLKYKK. A Ca(2+)-binding site is contributed by valine 172. 188–196 is an a 1,2-diacyl-sn-glycero-3-phospho-(1D-myo-inositol-4,5-bisphosphate) binding site; the sequence is RLFQVKGRR. The Gelsolin-like 2 repeat unit spans residues 198-270; the sequence is VRATEVPVSW…SEEGTEPEAM (73 aa). Ca(2+) contacts are provided by glycine 213 and aspartate 214. Cysteine 215 and cysteine 228 form a disulfide bridge. Glutamate 236 contacts Ca(2+). Positions 247–262 are enriched in basic and acidic residues; that stretch reads IRDNERSGRARVHVSE. The tract at residues 247–285 is disordered; the sequence is IRDNERSGRARVHVSEEGTEPEAMLQVLGPKPALPAGTE. Ca(2+) contacts are provided by aspartate 286, glutamate 329, aspartate 330, and glutamate 354. A Gelsolin-like 3 repeat occupies 317 to 389; sequence DENPFAQGAL…LPEGGETPLF (73 aa). Position 409 is a phosphotyrosine; by SRC; in vitro (tyrosine 409). Residues 434–782 are actin-binding, Ca-sensitive; it reads AAQHGMDDDG…LDRAMAELAA (349 aa). Residues 455–536 form a Gelsolin-like 4 repeat; sequence SNKVPVDPAT…VQGKEPAHLM (82 aa). Residue tyrosine 465 is modified to Phosphotyrosine; by SRC. The Ca(2+) site is built by glycine 471, aspartate 472, glutamate 502, aspartate 514, glycine 519, proline 521, and threonine 551. A Gelsolin-like 5 repeat occupies 576–642; the sequence is TRAVEVLPKA…AEGSEPDGFW (67 aa). Lysine 584 is subject to N6-acetyllysine. 2 residues coordinate Ca(2+): asparagine 591 and aspartate 592. Tyrosine 603 carries the post-translational modification Phosphotyrosine; by SRC; in vitro. Glutamate 614 is a Ca(2+) binding site. Position 651 is a phosphotyrosine; by SRC; in vitro (tyrosine 651). A Gelsolin-like 6 repeat occupies 681–756; it reads IEEVPGELMQ…VKQGFEPPSF (76 aa). Ca(2+) is bound by residues aspartate 696, aspartate 697, and glutamate 719. Threonine 742 is subject to Phosphothreonine.

It belongs to the villin/gelsolin family. In terms of assembly, binds to actin and to fibronectin. Identified in a complex composed of ACTA1, COBL, GSN and TMSB4X. Interacts with the inactive form of EIF2AK2/PKR. Interacts with FLII. Post-translationally, phosphorylation on Tyr-86, Tyr-409, Tyr-465, Tyr-603 and Tyr-651 in vitro is induced in presence of phospholipids. In terms of tissue distribution, phagocytic cells, platelets, fibroblasts, nonmuscle cells, smooth and skeletal muscle cells.

It localises to the cytoplasm. It is found in the cytoskeleton. The protein localises to the secreted. Its function is as follows. Calcium-regulated, actin-modulating protein that binds to the plus (or barbed) ends of actin monomers or filaments, preventing monomer exchange (end-blocking or capping). It can promote the assembly of monomers into filaments (nucleation) as well as sever filaments already formed. Plays a role in ciliogenesis. The protein is Gelsolin (GSN) of Homo sapiens (Human).